The sequence spans 2053 residues: Cell adhesion molecule DSCAML1 (2053 aa).

An N-terminal signal peptide occupies residues 1-18 (MWLVTFLLLLDSLHKARP). Ig-like C2-type domains lie at 19–119 (EDVG…NIRI), 115–217 (PNIR…ARLS), 226–310 (PTIL…GILT), 314–396 (PLHV…QTAQ), 408–501 (PRIV…ARIN), 506–586 (PSIR…LSIS), 596–685 (PPLI…RQLI), 690–784 (PRFV…MFLT), and 788–885 (PAMI…LTVQ). Over 19–1591 (EDVGTSLYFV…AQGEGDDVKK (1573 aa)) the chain is Extracellular. 7 disulfide bridges follow: C47/C103, C146/C198, C247/C294, C336/C386, C429/C485, C526/C575, and C617/C669. N79 carries an N-linked (GlcNAc...) asparagine glycan. Residues N368 and N471 are each glycosylated (N-linked (GlcNAc...) asparagine). N-linked (GlcNAc...) asparagine glycosylation is found at N666 and N710. Cysteines 711 and 767 form a disulfide. N809 is a glycosylation site (N-linked (GlcNAc...) asparagine). Cysteines 810 and 867 form a disulfide. Fibronectin type-III domains lie at 887–984 (PPDP…TEEA), 989–1088 (PPMD…TLED), 1093–1189 (PPEN…TKED), and 1193–1288 (PPAG…AGKA). 2 N-linked (GlcNAc...) asparagine glycosylation sites follow: N1144 and N1162. The Ig-like C2-type 10 domain maps to 1278-1377 (EKVTIEPAGK…TGGFDTIIVN (100 aa)). Residues C1311 and C1363 are joined by a disulfide bond. N1345 is a glycosylation site (N-linked (GlcNAc...) asparagine). Fibronectin type-III domains follow at residues 1383-1477 (PPDQ…THGR) and 1478-1578 (EPSF…TIPP). N1561 carries N-linked (GlcNAc...) asparagine glycosylation. Residues 1592-1612 (LFTIGCPVILATLGVALLFVV) traverse the membrane as a helical segment. Residues 1613-2053 (RKKRKEKRLK…GAYSKSYTLV (441 aa)) lie on the Cytoplasmic side of the membrane. Disordered stretches follow at residues 1716–1741 (LIDMSDIRPGTNPVSRKNVKSAHSTR), 1773–1803 (HGVTVTESDSYSASLSQDTDKGRNSMVSTES), 1840–1862 (SSDQMTTGTNENADSMTSMSTPS), and 1974–2053 (LAMP…YTLV). Positions 1732–1741 (KNVKSAHSTR) are enriched in basic residues. Residues 1773 to 1789 (HGVTVTESDSYSASLSQ) are compositionally biased toward polar residues. The segment covering 1977–1993 (PAPPAGTAPPAPGPTPS) has biased composition (pro residues).

Homodimer; mediates homophilic interactions to promote cell adhesion. As to expression, in the retina, expressed in the rod photoreceptors, AII amacrine cells and rod bipolar cells (at protein level).

It is found in the cell membrane. The protein resides in the synapse. Its function is as follows. Cell adhesion molecule that plays a role in neuronal self-avoidance. Promotes repulsion between specific neuronal processes of either the same cell or the same subtype of cells. Promotes both isoneuronal self-avoidance for creating an orderly neurite arborization in retinal rod bipolar cells and heteroneuronal self-avoidance to maintain mosaic spacing between AII amacrine cells. Adhesion molecule that promotes lamina-specific synaptic connections in the retina: expressed in specific subsets of interneurons and retinal ganglion cells (RGCs) and promotes synaptic connectivity via homophilic interactions. This chain is Cell adhesion molecule DSCAML1 (Dscaml1), found in Mus musculus (Mouse).